A 377-amino-acid chain; its full sequence is Succinyl-diaminopimelate desuccinylase (377 aa).

Histidine 67 is a binding site for Zn(2+). Aspartate 69 is an active-site residue. Aspartate 100 provides a ligand contact to Zn(2+). The active-site Proton acceptor is the glutamate 134. Glutamate 135, glutamate 163, and histidine 349 together coordinate Zn(2+).

Belongs to the peptidase M20A family. DapE subfamily. In terms of assembly, homodimer. Requires Zn(2+) as cofactor. It depends on Co(2+) as a cofactor.

The catalysed reaction is N-succinyl-(2S,6S)-2,6-diaminopimelate + H2O = (2S,6S)-2,6-diaminopimelate + succinate. Its pathway is amino-acid biosynthesis; L-lysine biosynthesis via DAP pathway; LL-2,6-diaminopimelate from (S)-tetrahydrodipicolinate (succinylase route): step 3/3. Its function is as follows. Catalyzes the hydrolysis of N-succinyl-L,L-diaminopimelic acid (SDAP), forming succinate and LL-2,6-diaminopimelate (DAP), an intermediate involved in the bacterial biosynthesis of lysine and meso-diaminopimelic acid, an essential component of bacterial cell walls. This is Succinyl-diaminopimelate desuccinylase from Buchnera aphidicola subsp. Baizongia pistaciae (strain Bp).